The sequence spans 398 residues: Dual-specificity RNA methyltransferase RlmN (398 aa).

Residue E119 is the Proton acceptor of the active site. The 240-residue stretch at 125–364 (EGDRATLCVS…TIVRKTRGDD (240 aa)) folds into the Radical SAM core domain. C132 and C369 are joined by a disulfide. [4Fe-4S] cluster-binding residues include C139, C143, and C146. S-adenosyl-L-methionine is bound by residues 193-194 (GE), S225, 247-249 (SLH), and N326. C369 serves as the catalytic S-methylcysteine intermediate.

The protein belongs to the radical SAM superfamily. RlmN family. The cofactor is [4Fe-4S] cluster.

It localises to the cytoplasm. It carries out the reaction adenosine(2503) in 23S rRNA + 2 reduced [2Fe-2S]-[ferredoxin] + 2 S-adenosyl-L-methionine = 2-methyladenosine(2503) in 23S rRNA + 5'-deoxyadenosine + L-methionine + 2 oxidized [2Fe-2S]-[ferredoxin] + S-adenosyl-L-homocysteine. The enzyme catalyses adenosine(37) in tRNA + 2 reduced [2Fe-2S]-[ferredoxin] + 2 S-adenosyl-L-methionine = 2-methyladenosine(37) in tRNA + 5'-deoxyadenosine + L-methionine + 2 oxidized [2Fe-2S]-[ferredoxin] + S-adenosyl-L-homocysteine. In terms of biological role, specifically methylates position 2 of adenine 2503 in 23S rRNA and position 2 of adenine 37 in tRNAs. m2A2503 modification seems to play a crucial role in the proofreading step occurring at the peptidyl transferase center and thus would serve to optimize ribosomal fidelity. The protein is Dual-specificity RNA methyltransferase RlmN of Yersinia enterocolitica serotype O:8 / biotype 1B (strain NCTC 13174 / 8081).